A 489-amino-acid chain; its full sequence is Ketol-acid reductoisomerase (NADP(+)) (489 aa).

The KARI N-terminal Rossmann domain occupies 16-207 (LRKCKLVEKN…GSHRAGVLHS (192 aa)). Residues 44 to 47 (CGSQ), R67, S77, and 107 to 109 (DKQ) contribute to the NADP(+) site. H131 is a catalytic residue. G157 contributes to the NADP(+) binding site. KARI C-terminal knotted domains follow at residues 208 to 343 (SFIA…KCKI) and 344 to 483 (CHKE…MVDM). Mg(2+) is bound by residues D216, E220, E388, and E392. S413 is a binding site for substrate.

This sequence belongs to the ketol-acid reductoisomerase family. Mg(2+) is required as a cofactor.

It catalyses the reaction (2R)-2,3-dihydroxy-3-methylbutanoate + NADP(+) = (2S)-2-acetolactate + NADPH + H(+). The enzyme catalyses (2R,3R)-2,3-dihydroxy-3-methylpentanoate + NADP(+) = (S)-2-ethyl-2-hydroxy-3-oxobutanoate + NADPH + H(+). It functions in the pathway amino-acid biosynthesis; L-isoleucine biosynthesis; L-isoleucine from 2-oxobutanoate: step 2/4. The protein operates within amino-acid biosynthesis; L-valine biosynthesis; L-valine from pyruvate: step 2/4. Its function is as follows. Involved in the biosynthesis of branched-chain amino acids (BCAA). Catalyzes an alkyl-migration followed by a ketol-acid reduction of (S)-2-acetolactate (S2AL) to yield (R)-2,3-dihydroxy-isovalerate. In the isomerase reaction, S2AL is rearranged via a Mg-dependent methyl migration to produce 3-hydroxy-3-methyl-2-ketobutyrate (HMKB). In the reductase reaction, this 2-ketoacid undergoes a metal-dependent reduction by NADPH to yield (R)-2,3-dihydroxy-isovalerate. This chain is Ketol-acid reductoisomerase (NADP(+)), found in Buchnera aphidicola subsp. Schlechtendalia chinensis.